The sequence spans 50 residues: Thymosin beta-4 (50 aa).

Residues 1 to 50 (MLLPATMSDKPDMAEIEKFDKSKLKKTETQEKNPLPSKETIEQEKQAGES) are disordered. Ser8 is modified (phosphoserine). Over residues 9–31 (DKPDMAEIEKFDKSKLKKTETQE) the composition is skewed to basic and acidic residues. An N6-acetyllysine modification is found at Lys10. Lys18 carries the post-translational modification N6-acetyllysine; alternate. A Glycyl lysine isopeptide (Lys-Gly) (interchain with G-Cter in SUMO2); alternate cross-link involves residue Lys18. Thr29 carries the phosphothreonine modification. The residue at position 32 (Lys32) is an N6-acetyllysine. Ser37 is modified (phosphoserine). Residue Lys38 is modified to N6-acetyllysine. The span at 39-50 (ETIEQEKQAGES) shows a compositional bias: basic and acidic residues. Thr40 carries the post-translational modification Phosphothreonine. Position 45 is an N6-acetyllysine (Lys45).

Belongs to the thymosin beta family. As to quaternary structure, identified in a complex composed of ACTA1, COBL, GSN AND TMSB4X. Interacts with SERPINB1. Post-translationally, acSDKP is inactivated by ACE, which removes the dipeptide Lys-Pro from its C-terminus. In terms of tissue distribution, originally found in thymus but it is widely distributed in many tissues.

The protein resides in the cytoplasm. It is found in the cytoskeleton. Its function is as follows. Plays an important role in the organization of the cytoskeleton. Binds to and sequesters actin monomers (G actin) and therefore inhibits actin polymerization. In terms of biological role, potent inhibitor of bone marrow derived stem cell differentiation. Acts by inhibits the entry of hematopoietic pluripotent stem cells into the S-phase. The protein is Thymosin beta-4 (Tmsb4x) of Mus musculus (Mouse).